The primary structure comprises 553 residues: MEKSIESISSSTLNILDNKNYKKWDNETVCKWLLNNIKTIQKVSIEIFQANEIIGKDLEFLTDKILLKMGVGIRDILNFKFEYQILKNCYNNNNNNNHITINNFNYNFNNFKININKDLLKVVVNAPIININEYQYIETISKNKFCEIEKYKKSQTKVNEYIIIKKIIKNSTLNEEKLINEIDTIYLLDHPNLIKIIGYCKDKNYFYIGMKYYETFKFKQSNISKFGKNFEQVIRKISFKILSAIDYLHSLEPPIIHGNINAKNILLDNENNEPILIDFGLSYKSIDLLTNQKTQFISPCFITPEYFYKKTKNKISKEADIFSFGSTISNMIKGGTDFKEDEEGFEELKRTFAGVLTSRDKVSFDYRSLFTEINKDEPCFRPSSKELLKSFWFVEPPQPSFKTSEITTNLLIYYLKKYGCYIIRDGVAMVSLNFNENIYSTSSIIGSEFSHQPKINEKHKYFKEINQFYSKILSESFQAKIGWYLLNLNNEFKDKPYFKNIFLSFSTSDKLEINSVADLNLKLTIFFYNSITMSLIYQTIYQKPKSFKIVDYL.

The SAM domain maps to 24–90 (WDNETVCKWL…FEYQILKNCY (67 aa)). One can recognise a Protein kinase domain in the interval 134–393 (YQYIETISKN…SKELLKSFWF (260 aa)). ATP contacts are provided by residues 140–148 (ISKNKFCEI) and Lys165.

It belongs to the protein kinase superfamily. Ser/Thr protein kinase family.

The protein is Probable inactive serine/threonine-protein kinase samkD (samkD) of Dictyostelium discoideum (Social amoeba).